Reading from the N-terminus, the 309-residue chain is UDP-N-acetylenolpyruvoylglucosamine reductase (309 aa).

One can recognise an FAD-binding PCMH-type domain in the interval 33-198 (RVGGPAQVLF…TSARFRGTPA (166 aa)). The active site involves arginine 178. Catalysis depends on serine 227, which acts as the Proton donor. Residue glutamate 297 is part of the active site.

This sequence belongs to the MurB family. The cofactor is FAD.

The protein resides in the cytoplasm. It carries out the reaction UDP-N-acetyl-alpha-D-muramate + NADP(+) = UDP-N-acetyl-3-O-(1-carboxyvinyl)-alpha-D-glucosamine + NADPH + H(+). The protein operates within cell wall biogenesis; peptidoglycan biosynthesis. In terms of biological role, cell wall formation. This chain is UDP-N-acetylenolpyruvoylglucosamine reductase, found in Rhodopseudomonas palustris (strain HaA2).